The primary structure comprises 231 residues: L-ribulose-5-phosphate 4-epimerase AraD (231 aa).

Substrate is bound by residues glycine 27 to asparagine 28, serine 44 to glycine 45, and serine 74 to serine 75. Aspartate 76, histidine 95, and histidine 97 together coordinate Zn(2+). The active-site Proton donor/acceptor is the aspartate 120. Histidine 171 contacts Zn(2+). Tyrosine 229 acts as the Proton donor/acceptor in catalysis.

This sequence belongs to the aldolase class II family. AraD/FucA subfamily. Homotetramer. Requires Zn(2+) as cofactor.

It carries out the reaction L-ribulose 5-phosphate = D-xylulose 5-phosphate. Its pathway is carbohydrate degradation; L-arabinose degradation via L-ribulose; D-xylulose 5-phosphate from L-arabinose (bacterial route): step 3/3. Inhibited by glycolohydroxamate at concentration above 0.1 mM. Its function is as follows. Involved in the degradation of L-arabinose. Catalyzes the interconversion of L-ribulose 5-phosphate (LRu5P) and D-xylulose 5-phosphate (D-Xu5P) via a retroaldol/aldol mechanism (carbon-carbon bond cleavage analogous to a class II aldolase reaction). This is L-ribulose-5-phosphate 4-epimerase AraD from Escherichia coli (strain K12).